The following is a 603-amino-acid chain: UvrABC system protein C (603 aa).

The GIY-YIG domain maps to 15 to 92; it reads DQPGCYLMKD…IKKHDPRFNI (78 aa). One can recognise a UVR domain in the interval 197 to 232; it reads KTVKNDLMKKMQEAAENMEFEKAGEFRDQINAIETT.

The protein belongs to the UvrC family. Interacts with UvrB in an incision complex.

It is found in the cytoplasm. Functionally, the UvrABC repair system catalyzes the recognition and processing of DNA lesions. UvrC both incises the 5' and 3' sides of the lesion. The N-terminal half is responsible for the 3' incision and the C-terminal half is responsible for the 5' incision. This chain is UvrABC system protein C, found in Listeria monocytogenes serotype 4b (strain F2365).